Here is a 323-residue protein sequence, read N- to C-terminus: Pantothenate kinase (323 aa).

Positions 1 to 12 (MAEQNAASTTGV) are enriched in polar residues. The segment at 1–24 (MAEQNAASTTGVKPSPRTPDFSPY) is disordered. Position 108–115 (108–115 (GSVAVGKS)) interacts with ATP.

It belongs to the prokaryotic pantothenate kinase family.

The protein localises to the cytoplasm. The catalysed reaction is (R)-pantothenate + ATP = (R)-4'-phosphopantothenate + ADP + H(+). It functions in the pathway cofactor biosynthesis; coenzyme A biosynthesis; CoA from (R)-pantothenate: step 1/5. This chain is Pantothenate kinase, found in Corynebacterium glutamicum (strain R).